Here is a 392-residue protein sequence, read N- to C-terminus: Putative purine permease 19 (392 aa).

Residues 1-16 (MGFHTKSPDRVTHEEE) are compositionally biased toward basic and acidic residues. The interval 1–29 (MGFHTKSPDRVTHEEEANIGVDNQPRETT) is disordered. Ser-30 bears the Phosphoserine mark. 10 consecutive transmembrane segments (helical) span residues 46–66 (ICIF…TLLL), 88–108 (WLQS…LLLW), 128–148 (LFLL…LYAI), 154–174 (VFFL…TTII), 182–202 (WIIL…TSSG), 220–240 (WCAF…QLGF), 254–274 (VILM…VGLF), 300–320 (LIGL…LVCL), 325–345 (FSNV…VLAF), and 354–374 (FFKE…VYSL).

Belongs to the purine permeases (TC 2.A.7.14) family.

It localises to the membrane. The sequence is that of Putative purine permease 19 (PUP19) from Arabidopsis thaliana (Mouse-ear cress).